A 180-amino-acid chain; its full sequence is Threonylcarbamoyl-AMP synthase (180 aa).

Residues Met-1 to Pro-180 form the YrdC-like domain.

The protein belongs to the SUA5 family. TsaC subfamily.

The protein resides in the cytoplasm. It catalyses the reaction L-threonine + hydrogencarbonate + ATP = L-threonylcarbamoyladenylate + diphosphate + H2O. Functionally, required for the formation of a threonylcarbamoyl group on adenosine at position 37 (t(6)A37) in tRNAs that read codons beginning with adenine. Catalyzes the conversion of L-threonine, HCO(3)(-)/CO(2) and ATP to give threonylcarbamoyl-AMP (TC-AMP) as the acyladenylate intermediate, with the release of diphosphate. The polypeptide is Threonylcarbamoyl-AMP synthase (Methylobacillus flagellatus (strain ATCC 51484 / DSM 6875 / VKM B-1610 / KT)).